The chain runs to 196 residues: FAD-linked sulfhydryl oxidase ERV2 (196 aa).

At 1–12 (MKQIVKRSHAIR) the chain is on the cytoplasmic side. A helical; Signal-anchor transmembrane segment spans residues 13-35 (IVAALGIIGLWMFFSSNELSIAT). Topologically, residues 36 to 196 (PGLIKAKSGI…SLEKEAKQHG (161 aa)) are lumenal. In terms of domain architecture, ERV/ALR sulfhydryl oxidase spans 72–174 (MGDDKVKKEV…YDCATILEDY (103 aa)). Residues K78, R83, and W86 each contribute to the FAD site. An intrachain disulfide couples C121 to C124. H127, C150, H153, N157, K162, and Y174 together coordinate FAD. A disulfide bridge connects residues C150 and C167. Cysteines 176 and 178 form a disulfide.

As to quaternary structure, homodimer. Interacts with the substrate protein PDI1, forming transient intermolecular disulfide bridges. Requires FAD as cofactor.

Its subcellular location is the endoplasmic reticulum membrane. The enzyme catalyses 2 R'C(R)SH + O2 = R'C(R)S-S(R)CR' + H2O2. In terms of biological role, FAD-dependent sulfhydryl oxidase that catalyzes disulfide bond formation in the endoplasmic reticulum lumen in parallel to ERO1. In Saccharomyces cerevisiae (strain ATCC 204508 / S288c) (Baker's yeast), this protein is FAD-linked sulfhydryl oxidase ERV2 (ERV2).